The chain runs to 72 residues: PI-stichotoxin-Hcr2k (72 aa).

The first 9 residues, 1–9 (GFYFRSIQG), serve as a signal peptide directing secretion. A propeptide spanning residues 10–16 (FYFKRIQ) is cleaved from the precursor. The BPTI/Kunitz inhibitor domain maps to 20-70 (CSEPKKVGRCRRSFPRFYFDSETGKCTPFIYGGCGGNGNNFETLHACRAIC). Intrachain disulfides connect Cys20–Cys70, Cys29–Cys53, and Cys45–Cys66.

Belongs to the venom Kunitz-type family. Sea anemone type 2 potassium channel toxin subfamily.

Its subcellular location is the nematocyst. The protein localises to the secreted. Its function is as follows. Serine protease inhibitor that also shows protective effect in a cytotoxicity model. It inhibits the serine protease trypsin (Ki=630 nM). It significantly increases neuroblastoma cell viability in an in vitro neurotoxicity model, being a consequence of an effective decrease of reactive oxygen species (ROS) level in the cells. It also seems to protect cells by inhibiting ATP-induced purinoceptor (P2RX7) activation. The polypeptide is PI-stichotoxin-Hcr2k (Radianthus crispa (Leathery sea anemone)).